The following is a 492-amino-acid chain: Mitochondrial distribution and morphology protein 12 (492 aa).

In terms of domain architecture, SMP-LTD spans 1 to 492 (MSIDLNWETV…VYPSFWTFLV (492 aa)). Disordered regions lie at residues 68–158 (DFYE…STPG), 199–301 (LEGH…GHPR), and 379–434 (AVGG…GSGN). Residues 78–90 (VASDDSEGEEDAV) are compositionally biased toward acidic residues. Residues 130 to 139 (SPGGPGGPGM) show a composition bias toward gly residues. The span at 246–257 (LNPNSLAPPSSS) shows a compositional bias: low complexity. Residues 270–285 (TTPAPGSATALSGSNE) are compositionally biased toward polar residues. Positions 387–400 (GLSSPGEGPSQAQG) are enriched in low complexity. A compositionally biased stretch (gly residues) spans 401–415 (QGQGQGQGQGQGQTP). Positions 416 to 428 (GAGQQKQQKKQAG) are enriched in low complexity.

The protein belongs to the MDM12 family. Component of the ER-mitochondria encounter structure (ERMES) or MDM complex, composed of MMM1, MDM10, MDM12 and MDM34. An MMM1 homodimer associates with one molecule of MDM12 on each side in a pairwise head-to-tail manner, and the SMP-LTD domains of MMM1 and MDM12 generate a continuous hydrophobic tunnel for phospholipid trafficking.

Its subcellular location is the mitochondrion outer membrane. The protein resides in the endoplasmic reticulum membrane. Functionally, component of the ERMES/MDM complex, which serves as a molecular tether to connect the endoplasmic reticulum (ER) and mitochondria. Components of this complex are involved in the control of mitochondrial shape and protein biogenesis, and function in nonvesicular lipid trafficking between the ER and mitochondria. MDM12 is required for the interaction of the ER-resident membrane protein MMM1 and the outer mitochondrial membrane-resident beta-barrel protein MDM10. The MDM12-MMM1 subcomplex functions in the major beta-barrel assembly pathway that is responsible for biogenesis of all mitochondrial outer membrane beta-barrel proteins, and acts in a late step after the SAM complex. The MDM10-MDM12-MMM1 subcomplex further acts in the TOM40-specific pathway after the action of the MDM12-MMM1 complex. Essential for establishing and maintaining the structure of mitochondria and maintenance of mtDNA nucleoids. The sequence is that of Mitochondrial distribution and morphology protein 12 from Chaetomium globosum (strain ATCC 6205 / CBS 148.51 / DSM 1962 / NBRC 6347 / NRRL 1970) (Soil fungus).